A 58-amino-acid polypeptide reads, in one-letter code: uncharacterized protein (58 aa).

A helical transmembrane segment spans residues 24–44 (LSVYLGLATTIVCIVLFFTML).

It localises to the membrane. This is an uncharacterized protein from Haemophilus influenzae (strain ATCC 51907 / DSM 11121 / KW20 / Rd).